Consider the following 364-residue polypeptide: GDP-fucose transporter 1 (364 aa).

Helical transmembrane passes span 34–56 (FLLR…ISMV), 76–98 (VTFY…AACC), 111–130 (LRVA…MITF), 140–162 (VAFY…YLLL), 167–185 (SFYA…WLGV), 195–214 (SWLG…LNAI), 227–249 (IWRL…LLLL), and 264–286 (AHFW…VTGL).

It belongs to the TPT transporter family. SLC35C subfamily.

Its subcellular location is the golgi apparatus membrane. The enzyme catalyses GMP(out) + GDP-beta-L-fucose(in) = GMP(in) + GDP-beta-L-fucose(out). Functionally, antiporter specific for GDP-l-fucose and depending on the concomitant reverse transport of GMP. Involved in GDP-fucose import from the cytoplasm into the Golgi lumen. The chain is GDP-fucose transporter 1 from Homo sapiens (Human).